Reading from the N-terminus, the 119-residue chain is Chymotrypsin inhibitor WCI (119 aa).

Disulfide bonds link C6/C55, C20/C44, C29/C87, C45/C105, and C57/C116.

Its subcellular location is the secreted. Its function is as follows. Inhibits bovine, insect and wheat chymotrypsins. Inhibits bovine chymotrypsin with Ki of 0.6 nM. Does not inhibit human or wheat alpha-amylases, bovine pancreatic trypsin, or trypsin-like activity isolated from wheat. The chain is Chymotrypsin inhibitor WCI from Triticum aestivum (Wheat).